Here is a 377-residue protein sequence, read N- to C-terminus: Alanine racemase (377 aa).

The Proton acceptor; specific for D-alanine role is filled by Lys-39. Lys-39 is subject to N6-(pyridoxal phosphate)lysine. Arg-137 is a substrate binding site. Tyr-266 acts as the Proton acceptor; specific for L-alanine in catalysis. Met-314 contacts substrate.

Belongs to the alanine racemase family. Pyridoxal 5'-phosphate is required as a cofactor.

The enzyme catalyses L-alanine = D-alanine. The protein operates within amino-acid biosynthesis; D-alanine biosynthesis; D-alanine from L-alanine: step 1/1. Its function is as follows. Catalyzes the interconversion of L-alanine and D-alanine. May also act on other amino acids. The protein is Alanine racemase (alr) of Symbiobacterium thermophilum (strain DSM 24528 / JCM 14929 / IAM 14863 / T).